The following is a 539-amino-acid chain: Probable methionine--tRNA ligase, mitochondrial (539 aa).

The 'HIGH' region motif lies at Phe-28–His-38. The 'KMSKS' region motif lies at Lys-326 to Ser-330. Lys-329 serves as a coordination point for ATP.

Belongs to the class-I aminoacyl-tRNA synthetase family.

The protein resides in the mitochondrion matrix. It catalyses the reaction tRNA(Met) + L-methionine + ATP = L-methionyl-tRNA(Met) + AMP + diphosphate. In Schizosaccharomyces pombe (strain 972 / ATCC 24843) (Fission yeast), this protein is Probable methionine--tRNA ligase, mitochondrial.